The following is a 460-amino-acid chain: Receptor-like cytosolic serine/threonine-protein kinase RBK2 (460 aa).

Positions 1–67 are disordered; the sequence is MNSASAHDLR…DADTDVQCKN (67 aa). The span at 7 to 23 shows a compositional bias: basic and acidic residues; the sequence is HDLRLLEVDKEKQDPKS. The region spanning 143 to 415 is the Protein kinase domain; sequence FSPENIIGRG…VELLLGHEDV (273 aa). Residues 149-157 and Lys171 contribute to the ATP site; that span reads IGRGGYADV. Residue Asp267 is the Proton acceptor of the active site. Thr307 carries the post-translational modification Phosphothreonine. At Tyr315 the chain carries Phosphotyrosine.

The protein belongs to the protein kinase superfamily. Ser/Thr protein kinase family. As to quaternary structure, interacts with ARAC5 and ARAC10.

The protein resides in the cytoplasm. It catalyses the reaction L-seryl-[protein] + ATP = O-phospho-L-seryl-[protein] + ADP + H(+). The enzyme catalyses L-threonyl-[protein] + ATP = O-phospho-L-threonyl-[protein] + ADP + H(+). In Arabidopsis thaliana (Mouse-ear cress), this protein is Receptor-like cytosolic serine/threonine-protein kinase RBK2 (RBK2).